A 3133-amino-acid chain; its full sequence is Hemocytin (3133 aa).

In terms of domain architecture, TIL 1 spans 40-96; it reads CTGGQQYTVCADSCLRKCSDTALAASGQCKPVCVEGCACSPSQLLDDNGVCVPVAKC. An N-linked (GlcNAc...) asparagine glycan is attached at asparagine 151. In terms of domain architecture, TIL 2 spans 153–209; it reads TAQNMEFTTCETSEPLTCKNMHLPPSTQTAECRPGCQCKKGQVLDTASKRCVPATQC. A glycan (N-linked (GlcNAc...) asparagine) is linked at asparagine 237. One can recognise a VWFD 1 domain in the interval 247–418; sequence GVCGAWGDSH…DSWKLKPTCP (172 aa). 3 cysteine pairs are disulfide-bonded: cysteine 249–cysteine 380, cysteine 271–cysteine 417, and cysteine 295–cysteine 302. Residues 509–576 enclose the TIL 3 domain; sequence CDEVCSNYDS…TTECVPRAKC (68 aa). Asparagine 564 carries an N-linked (GlcNAc...) asparagine glycan. Positions 661 to 680 are disordered; that stretch reads PDGQSVESEPLPKPNELQIG. The TIL 4 domain occupies 770-837; sequence CPPGEVYQAC…ERTCVPVKDC (68 aa). Positions 899–924 are disordered; that stretch reads STTTTTTTSTTTTTTTPEPTETTTET. Cystine bridges form between cysteine 940–cysteine 1095 and cysteine 1116–cysteine 1254. 2 consecutive F5/8 type C domains span residues 940 to 1095 and 1116 to 1254; these read CSPD…IIGC and CTEP…PIGC. 5 N-linked (GlcNAc...) asparagine glycosylation sites follow: asparagine 1170, asparagine 1387, asparagine 1622, asparagine 1727, and asparagine 1847. Residues 1619–1794 enclose the VWFD 2 domain; that stretch reads VFCNMTGRTF…KPGVPADACA (176 aa). 2 disulfide bridges follow: cysteine 1621–cysteine 1754 and cysteine 1641–cysteine 1793. The 59-residue stretch at 1890-1948 folds into the TIL 5 domain; sequence CPPPLVHYDCYRKRCEETCAPYPNAARACPAQEGQCSPGCYCPDGKLRKGDQCVLPADC. A VWFD 3 domain is found at 1951–2136; the sequence is CTCTGVGTPA…WQASPEKLTE (186 aa). Disulfide bonds link cysteine 1953–cysteine 2099 and cysteine 2001–cysteine 2009. Asparagine 1975 and asparagine 1985 each carry an N-linked (GlcNAc...) asparagine glycan. Residues asparagine 2093, asparagine 2113, asparagine 2161, asparagine 2276, and asparagine 2451 are each glycosylated (N-linked (GlcNAc...) asparagine). Residues 2229 to 2285 enclose the TIL 6 domain; the sequence is CEEPFVYRACVDCERTCDNYEQLQTSPEKCTNKPVEGCFCPEGKVRVNNTCIEPGKC. Residues 2553–2622 form the VWFC 1 domain; it reads VACRHQDNVY…DSGQCCGKCE (70 aa). N-linked (GlcNAc...) asparagine glycosylation is found at asparagine 2647, asparagine 2654, asparagine 2663, asparagine 2794, asparagine 2810, asparagine 2865, asparagine 2929, asparagine 2964, and asparagine 3028. One can recognise a VWFC 2 domain in the interval 2842–2907; that stretch reads VACRDGDKIY…AADHCCGRCV (66 aa). 4 disulfides stabilise this stretch: cysteine 2971/cysteine 3040, cysteine 2991/cysteine 3054, cysteine 3004/cysteine 3070, and cysteine 3020/cysteine 3072. Residues 2971 to 3076 form the CTCK domain; that stretch reads CNEKPQALSK…PARCHCAACG (106 aa).

Post-translationally, may be converted into the 260 kDa mature hemocytin by proteolysis.

Adhesive protein and relates to hemostasis or encapsulation of foreign substances for self-defense. The chain is Hemocytin from Bombyx mori (Silk moth).